The following is a 431-amino-acid chain: Hydroxylamine reductase (431 aa).

Cysteine 5, cysteine 8, cysteine 17, and cysteine 23 together coordinate [4Fe-4S] cluster. Positions 131, 155, 199, 286, 314, 339, 373, and 375 each coordinate hybrid [4Fe-2O-2S] cluster. Cysteine 286 is subject to Cysteine persulfide.

Belongs to the HCP family. The cofactor is [4Fe-4S] cluster. It depends on hybrid [4Fe-2O-2S] cluster as a cofactor.

The protein resides in the cytoplasm. The catalysed reaction is A + NH4(+) + H2O = hydroxylamine + AH2 + H(+). Its function is as follows. Catalyzes the reduction of hydroxylamine to form NH(3) and H(2)O. In Thermotoga maritima (strain ATCC 43589 / DSM 3109 / JCM 10099 / NBRC 100826 / MSB8), this protein is Hydroxylamine reductase.